Here is a 685-residue protein sequence, read N- to C-terminus: Multisite-specific tRNA:(cytosine-C(5))-methyltransferase trm4b (685 aa).

S-adenosyl-L-methionine-binding positions include 167–173 (CAAPGSK), aspartate 208, aspartate 235, and aspartate 270. The active-site Nucleophile is the cysteine 323.

This sequence belongs to the class I-like SAM-binding methyltransferase superfamily. RsmB/NOP family. TRM4 subfamily.

The protein resides in the nucleus. It catalyses the reaction cytidine(49) in tRNA precursor + S-adenosyl-L-methionine = 5-methylcytidine(49) in tRNA precursor + S-adenosyl-L-homocysteine + H(+). The enzyme catalyses cytidine(50) in tRNA + S-adenosyl-L-methionine = 5-methylcytidine(50) in tRNA + S-adenosyl-L-homocysteine + H(+). The catalysed reaction is cytidine(60) in tRNA(Asp) + S-adenosyl-L-methionine = 5-methylcytidine(60) in tRNA(Asp) + S-adenosyl-L-homocysteine + H(+). It carries out the reaction cytidine(61) in tRNA(Asp) + S-adenosyl-L-methionine = 5-methylcytidine(61) in tRNA(Asp) + S-adenosyl-L-homocysteine + H(+). It catalyses the reaction cytidine(62) in tRNA(Asp) + S-adenosyl-L-methionine = 5-methylcytidine(62) in tRNA(Asp) + S-adenosyl-L-homocysteine + H(+). TRNA cytosine C(5)-methyltransferase that methylates cytosine to 5-methylcytosine (m5C) in tRNAs at position 49 and 50. Trm4a and trm4b methylate different sets of tRNAs. Also methylates cytosine to m5C at positions (60, 61 and 62) in tRNA(Asp). In Schizosaccharomyces pombe (strain 972 / ATCC 24843) (Fission yeast), this protein is Multisite-specific tRNA:(cytosine-C(5))-methyltransferase trm4b.